A 380-amino-acid polypeptide reads, in one-letter code: Probable cytosolic iron-sulfur protein assembly protein 1 (380 aa).

WD repeat units follow at residues 10 to 49 (AHND…KFPL), 56 to 108 (THKR…VEYD), 135 to 175 (GHEN…EEFE), 182 to 221 (DHSQ…DEWS), 228 to 275 (GHEG…EEDK), 299 to 338 (VHKY…KWVI), and 346 to 380 (HGVH…LWNV).

This sequence belongs to the WD repeat CIA1 family. Interacts with NAR1.

It is found in the cytoplasm. Its subcellular location is the nucleus. In terms of biological role, essential component of the cytosolic iron-sulfur (Fe/S) protein assembly machinery. Required for the maturation of extramitochondrial Fe/S proteins. This is Probable cytosolic iron-sulfur protein assembly protein 1 from Candida dubliniensis (strain CD36 / ATCC MYA-646 / CBS 7987 / NCPF 3949 / NRRL Y-17841) (Yeast).